A 269-amino-acid polypeptide reads, in one-letter code: Tryptophan synthase alpha chain (269 aa).

Residues Glu-49 and Asp-60 each act as proton acceptor in the active site.

It belongs to the TrpA family. In terms of assembly, tetramer of two alpha and two beta chains.

It catalyses the reaction (1S,2R)-1-C-(indol-3-yl)glycerol 3-phosphate + L-serine = D-glyceraldehyde 3-phosphate + L-tryptophan + H2O. It participates in amino-acid biosynthesis; L-tryptophan biosynthesis; L-tryptophan from chorismate: step 5/5. Functionally, the alpha subunit is responsible for the aldol cleavage of indoleglycerol phosphate to indole and glyceraldehyde 3-phosphate. This Proteus mirabilis (strain HI4320) protein is Tryptophan synthase alpha chain.